A 427-amino-acid chain; its full sequence is Adenylosuccinate synthetase (427 aa).

Residues 12–18 (GDEGKGK) and 40–42 (GHT) each bind GTP. Residue aspartate 13 is the Proton acceptor of the active site. Mg(2+)-binding residues include aspartate 13 and glycine 40. IMP is bound by residues 13-16 (DEGK), 38-41 (NAGH), threonine 131, arginine 145, glutamine 226, threonine 241, and arginine 305. Histidine 41 acts as the Proton donor in catalysis. Residue 301-307 (ATTGRKR) participates in substrate binding. GTP contacts are provided by residues arginine 307, 333-335 (KLD), and 415-417 (SVG).

Belongs to the adenylosuccinate synthetase family. Homodimer. Requires Mg(2+) as cofactor.

Its subcellular location is the cytoplasm. The enzyme catalyses IMP + L-aspartate + GTP = N(6)-(1,2-dicarboxyethyl)-AMP + GDP + phosphate + 2 H(+). Its pathway is purine metabolism; AMP biosynthesis via de novo pathway; AMP from IMP: step 1/2. Its function is as follows. Plays an important role in the de novo pathway of purine nucleotide biosynthesis. Catalyzes the first committed step in the biosynthesis of AMP from IMP. This Oleidesulfovibrio alaskensis (strain ATCC BAA-1058 / DSM 17464 / G20) (Desulfovibrio alaskensis) protein is Adenylosuccinate synthetase.